The sequence spans 825 residues: Translation initiation factor IF-2 (825 aa).

Composition is skewed to basic and acidic residues over residues 1–19, 35–45, 70–98, and 113–122; these read MTKKQENETSKELGMDNKK, RKGEKKTEGKR, LLKDLKQKQRADEARLDQESKAAKQEYKK, and KKVESVEKPA. The interval 1–239 is disordered; the sequence is MTKKQENETS…TQRKDRPLPE (239 aa). Low complexity predominate over residues 158 to 169; sequence PSSSRRPSSRPS. Positions 181–191 are enriched in basic residues; that stretch reads GRRRKSGKPGR. Residues 194–208 are compositionally biased toward polar residues; it reads QNSYADQGRGANSNR. The segment covering 211-220 has biased composition (basic residues); the sequence is QRKRKNKKHQ. One can recognise a tr-type G domain in the interval 326–495; that stretch reads VRPPVVTIMG…ILEADMLELK (170 aa). The segment at 335–342 is G1; that stretch reads GHVDHGKT. 335–342 is a GTP binding site; that stretch reads GHVDHGKT. Residues 360-364 form a G2 region; the sequence is GITQN. Positions 381–384 are G3; that stretch reads DTPG. GTP-binding positions include 381–385 and 435–438; these read DTPGH and NKMD. Positions 435 to 438 are G4; sequence NKMD. The G5 stretch occupies residues 471–473; it reads SAK.

It belongs to the TRAFAC class translation factor GTPase superfamily. Classic translation factor GTPase family. IF-2 subfamily.

It localises to the cytoplasm. Its function is as follows. One of the essential components for the initiation of protein synthesis. Protects formylmethionyl-tRNA from spontaneous hydrolysis and promotes its binding to the 30S ribosomal subunits. Also involved in the hydrolysis of GTP during the formation of the 70S ribosomal complex. This chain is Translation initiation factor IF-2, found in Lactobacillus delbrueckii subsp. bulgaricus (strain ATCC 11842 / DSM 20081 / BCRC 10696 / JCM 1002 / NBRC 13953 / NCIMB 11778 / NCTC 12712 / WDCM 00102 / Lb 14).